Consider the following 196-residue polypeptide: MARSFYSHIKEAWRSPKEGKLAELQWQRKQEWRDEGAIERIERPTRLDKARELGYKAKQGVVVARVSVRKGGSRKQRHKAGRRSKRQGVNRLSRRKSIQRISEERASRKYRNLRVLNSYWVGEDGSQKWHEVILVDPNHPAIENDGDLGWIASDDHKGRAFRGLTSAGTKGRGQRTRGTGTEKTRPSVTGNDRQGK.

Residues 69–98 (RKGGSRKQRHKAGRRSKRQGVNRLSRRKSI) show a composition bias toward basic residues. Disordered regions lie at residues 69-100 (RKGGSRKQRHKAGRRSKRQGVNRLSRRKSIQR) and 161-196 (FRGLTSAGTKGRGQRTRGTGTEKTRPSVTGNDRQGK). A compositionally biased stretch (polar residues) spans 186–196 (PSVTGNDRQGK).

This sequence belongs to the eukaryotic ribosomal protein eL15 family.

The chain is Large ribosomal subunit protein eL15 from Halorubrum lacusprofundi (strain ATCC 49239 / DSM 5036 / JCM 8891 / ACAM 34).